The primary structure comprises 248 residues: Granzyme-like protein 2 (248 aa).

An N-terminal signal peptide occupies residues 1-18 (MFLFLIFLVAVLPVNTEG). Positions 19-20 (GE) are cleaved as a propeptide — activation peptide. Residues 21–243 (IVWGTESKPH…FIPWIQKTMK (223 aa)) enclose the Peptidase S1 domain. An intrachain disulfide couples cysteine 50 to cysteine 66. Catalysis depends on charge relay system residues histidine 65 and aspartate 108. 2 cysteine pairs are disulfide-bonded: cysteine 142/cysteine 207 and cysteine 172/cysteine 186. N-linked (GlcNAc...) asparagine glycans are attached at residues asparagine 152 and asparagine 180. The active-site Charge relay system is the serine 201.

Belongs to the peptidase S1 family. Granzyme subfamily. In terms of tissue distribution, duodenum, lung and spleen.

Functionally, this enzyme is necessary for target cell lysis in cell-mediated immune responses. In Rattus norvegicus (Rat), this protein is Granzyme-like protein 2.